Here is a 178-residue protein sequence, read N- to C-terminus: Capsid assembly scaffolding protein (178 aa).

The protein belongs to the SPP1-like scaffolding protein family. Homodimer.

Functionally, scaffolding protein involved in the icosahedric procapsid assembly. Coassembles with the capsid proteins to form the procapsid, in which the scaffolding protein is found within the external shell of icosahedrally arranged capsid protein subunits. In a subsequent step the scaffolding protein molecules are released from the procapsid. This is Capsid assembly scaffolding protein (g20) from Lactobacillus delbrueckii (Lactococcus delbrueckii bacteriophage LL-H).